Reading from the N-terminus, the 239-residue chain is RNA chaperone ProQ (239 aa).

The tract at residues 107-177 (KARVQAQRAE…RKPVAKPVQA (71 aa)) is disordered. The segment covering 115–137 (AEQRAKKREAENVAAGEKNERPT) has biased composition (basic and acidic residues).

The protein belongs to the ProQ family.

The protein localises to the cytoplasm. In terms of biological role, RNA chaperone with significant RNA binding, RNA strand exchange and RNA duplexing activities. May regulate ProP activity through an RNA-based, post-transcriptional mechanism. The protein is RNA chaperone ProQ of Photorhabdus laumondii subsp. laumondii (strain DSM 15139 / CIP 105565 / TT01) (Photorhabdus luminescens subsp. laumondii).